Reading from the N-terminus, the 453-residue chain is GTPase Der (453 aa).

EngA-type G domains follow at residues 4 to 169 (PIVA…PPVT) and 177 to 352 (IKIA…EEHK). GTP contacts are provided by residues 10–17 (GRPNVGKS), 57–61 (DTGGL), 120–123 (NKCE), 183–190 (GRPNVGKS), 230–234 (DTAGI), and 295–298 (NKWD). Residues 353–438 (RRVSTSVINE…PIRLLWRSKK (86 aa)) enclose the KH-like domain.

This sequence belongs to the TRAFAC class TrmE-Era-EngA-EngB-Septin-like GTPase superfamily. EngA (Der) GTPase family. As to quaternary structure, associates with the 50S ribosomal subunit.

Functionally, GTPase that plays an essential role in the late steps of ribosome biogenesis. The protein is GTPase Der of Nostoc sp. (strain PCC 7120 / SAG 25.82 / UTEX 2576).